The sequence spans 642 residues: Uromodulin (642 aa).

Positions M1 to S24 are cleaved as a signal peptide. Residues N25 and N38 are each glycosylated (N-linked (GlcNAc...) asparagine). The region spanning E28 to E64 is the EGF-like 1 domain. 21 cysteine pairs are disulfide-bonded: C32/C41, C35/C50, C52/C63, C69/C82, C77/C91, C93/C105, C111/C125, C119/C134, C136/C147, C149/C160, C154/C171, C175/C268, C196/C283, C218/C256, C224/C288, C249/C257, C298/C307, C301/C316, C318/C348, C336/C426, and C367/C390. The region spanning D65 to T106 is the EGF-like 2; calcium-binding domain. N-linked (GlcNAc...) asparagine glycans are attached at residues N76 and N79. One can recognise an EGF-like 3; calcium-binding domain in the interval D107–E148. The interval C149–Q172 is beta hairpin. The tract at residues D173 to S292 is D10C. N-linked (GlcNAc...) asparagine glycosylation occurs at N233. N276 is a glycosylation site (N-linked (GlcNAc...) asparagine). One can recognise an EGF-like 4 domain in the interval S293–I324. N-linked (GlcNAc...) asparagine glycosylation occurs at N323. The segment at E335–L430 is ZP-N. The ZP domain occupies E335–S590. 2 N-linked (GlcNAc...) asparagine glycosylation sites follow: N397 and N448. The tract at residues D431–T454 is flexible ZP-N/ZP-C linker; important for secretion and polymerization into filaments. Residues G455–Q465 are internal hydrophobic patch (IHP). Positions G455–S590 are ZP-C. Intrachain disulfides connect C507–C567, C528–C583, and C572–C579. N-linked (GlcNAc...) asparagine glycosylation occurs at N514. Positions R587 to S590 are essential for cleavage by HPN. The external hydrophobic patch (EHP); regulates polymerization into filaments stretch occupies residues V599–R607. Residue A618 is the site of GPI-anchor amidated alanine attachment. Positions S619–Q642 are cleaved as a propeptide — removed in mature form.

In terms of assembly, homodimer that then polymerizes into long filaments. The filaments can additionally assemble laterally to form a sheet. The filaments consist of a zigzag-shaped backbone with laterally protruding arms which interact with bacterial adhesin fimH. Two fimH molecules can bind to a single UMOD monomer. N-glycosylated. Post-translationally, proteolytically cleaved at a conserved C-terminal proteolytic cleavage site to generate the secreted form found in urine. This cleavage is catalyzed by HPN. As to expression, detected in urine (secreted form). Detected in kidney thick ascending limb epithelial cells (at protein level).

Its subcellular location is the secreted. It is found in the apical cell membrane. The protein localises to the basolateral cell membrane. The protein resides in the cell projection. It localises to the cilium membrane. In terms of biological role, functions in biogenesis and organization of the apical membrane of epithelial cells of the thick ascending limb of Henle's loop (TALH), where it promotes formation of complex filamentous gel-like structure that may play a role in the water barrier permeability. May serve as a receptor for binding and endocytosis of cytokines (IL-1, IL-2) and TNF. Facilitates neutrophil migration across renal epithelia. Its function is as follows. In the urine, may contribute to colloid osmotic pressure, retards passage of positively charged electrolytes and inhibits formation of liquid containing supersaturated salts and subsequent formation of salt crystals. Protects against urinary tract infections by binding to type 1 fimbriated E.coli. Binds to the bacterial adhesin fimH which mediates the stable formation of bacterial aggregates, prevents the binding of E.coli to uroplakins UPK1A and UPK1B which act as urothelial receptors for type I fimbriae, and allows for pathogen clearance through micturation. Also promotes aggregation of other bacteria including K.pneumoniae, P.aeruginosa and S.mitis and so may also protect against other uropathogens. The chain is Uromodulin (Umod) from Mus musculus (Mouse).